The sequence spans 234 residues: Synaptogyrin-1 (234 aa).

At methionine 1 the chain carries N-acetylmethionine. At methionine 1–glutamine 23 the chain is on the cytoplasmic side. One can recognise an MARVEL domain in the interval leucine 20–glutamine 173. Residues proline 24–valine 44 traverse the membrane as a helical segment. Over asparagine 45–glycine 71 the chain is Lumenal. The chain crosses the membrane as a helical span at residues valine 72–phenylalanine 92. Residues proline 93–lysine 103 are Cytoplasmic-facing. The chain crosses the membrane as a helical span at residues alanine 104–cysteine 124. At phenylalanine 125 to arginine 148 the chain is on the lumenal side. A helical membrane pass occupies residues alanine 149–phenylalanine 169. At glutamine 170–tyrosine 234 the chain is on the cytoplasmic side. Residues glutamate 201–tyrosine 234 are disordered.

Belongs to the synaptogyrin family.

The protein localises to the cytoplasmic vesicle. It localises to the secretory vesicle. Its subcellular location is the synaptic vesicle membrane. It is found in the melanosome. Functionally, may play a role in regulated exocytosis. Modulates the localization of synaptophysin/SYP into synaptic-like microvesicles and may therefore play a role in synaptic-like microvesicle formation and/or maturation. Involved in the regulation of short-term and long-term synaptic plasticity. This is Synaptogyrin-1 from Mus musculus (Mouse).